A 285-amino-acid polypeptide reads, in one-letter code: NADPH-dependent 7-cyano-7-deazaguanine reductase (285 aa).

91 to 93 serves as a coordination point for substrate; that stretch reads IES. 93–94 provides a ligand contact to NADPH; that stretch reads SK. The Thioimide intermediate role is filled by Cys-191. Catalysis depends on Asp-198, which acts as the Proton donor. 230-231 contacts substrate; that stretch reads HE. 259 to 260 serves as a coordination point for NADPH; that stretch reads RG.

It belongs to the GTP cyclohydrolase I family. QueF type 2 subfamily. Homodimer.

The protein localises to the cytoplasm. The enzyme catalyses 7-aminomethyl-7-carbaguanine + 2 NADP(+) = 7-cyano-7-deazaguanine + 2 NADPH + 3 H(+). It functions in the pathway tRNA modification; tRNA-queuosine biosynthesis. Functionally, catalyzes the NADPH-dependent reduction of 7-cyano-7-deazaguanine (preQ0) to 7-aminomethyl-7-deazaguanine (preQ1). The polypeptide is NADPH-dependent 7-cyano-7-deazaguanine reductase (Legionella pneumophila (strain Lens)).